Here is a 336-residue protein sequence, read N- to C-terminus: MLVLGIETSCDETAAAIVKDGREVLSNIVYSQIEIHNQFGGVVPEIASRKHVEKISYVADMALKEADIDIDKIDAVAATYGPGLVGSLLVGLSFAKALSYARKIPFIAINHIEGHIYANFITYPKLKPPLIVLVVSGGHTNLIILEDFDRYEVVGKTRDDAAGEAFDKIARYLGLGYPGGPAIDKVARHGDEEKYKYPLADVEGYNFSFSGLKSAVINHVHTLNQRRENFKVEDVAASFQKAVVDTLVEKTIKLSLESNIKRVAIAGGVAANSKLREELSKRCSEHQIEFYVPDFKYCTDNAAMIASAGYFKLIKGQTSSYSTNAVPYISLVSKKE.

Residues histidine 111 and histidine 115 each contribute to the Fe cation site. Substrate-binding positions include 134 to 138 (VVSGG), aspartate 167, glycine 180, aspartate 184, and asparagine 272. Aspartate 300 lines the Fe cation pocket.

It belongs to the KAE1 / TsaD family. Requires Fe(2+) as cofactor.

The protein resides in the cytoplasm. It catalyses the reaction L-threonylcarbamoyladenylate + adenosine(37) in tRNA = N(6)-L-threonylcarbamoyladenosine(37) in tRNA + AMP + H(+). Its function is as follows. Required for the formation of a threonylcarbamoyl group on adenosine at position 37 (t(6)A37) in tRNAs that read codons beginning with adenine. Is involved in the transfer of the threonylcarbamoyl moiety of threonylcarbamoyl-AMP (TC-AMP) to the N6 group of A37, together with TsaE and TsaB. TsaD likely plays a direct catalytic role in this reaction. The chain is tRNA N6-adenosine threonylcarbamoyltransferase from Caldicellulosiruptor saccharolyticus (strain ATCC 43494 / DSM 8903 / Tp8T 6331).